The primary structure comprises 119 residues: Large ribosomal subunit protein bL20 (119 aa).

The protein belongs to the bacterial ribosomal protein bL20 family.

In terms of biological role, binds directly to 23S ribosomal RNA and is necessary for the in vitro assembly process of the 50S ribosomal subunit. It is not involved in the protein synthesizing functions of that subunit. The chain is Large ribosomal subunit protein bL20 from Nitrosomonas europaea (strain ATCC 19718 / CIP 103999 / KCTC 2705 / NBRC 14298).